The following is a 94-amino-acid chain: Citrate lyase acyl carrier protein (94 aa).

Serine 14 carries the O-(phosphoribosyl dephospho-coenzyme A)serine modification.

Belongs to the CitD family. Oligomer with a subunit composition of (alpha,beta,gamma)6.

The protein localises to the cytoplasm. Covalent carrier of the coenzyme of citrate lyase. The polypeptide is Citrate lyase acyl carrier protein (Halothermothrix orenii (strain H 168 / OCM 544 / DSM 9562)).